We begin with the raw amino-acid sequence, 263 residues long: Lens fiber major intrinsic protein (263 aa).

At 1-9 the chain is on the cytoplasmic side; the sequence is MWELRSASF. The helical transmembrane segment at 10–29 threads the bilayer; the sequence is WRAICAEFFASLFYVFFGLG. Over 30-41 the chain is Extracellular; that stretch reads ASLRWAPGPLHV. The chain crosses the membrane as a helical span at residues 42 to 59; it reads LQVALAFGLALATLVQAV. The Cytoplasmic segment spans residues 60–61; sequence GH. The segment at residues 62-77 is an intramembrane region (discontinuously helical); sequence ISGAHVNPAVTFAFLV. The short motif at 68–70 is the NPA 1 element; that stretch reads NPA. Topologically, residues 78-82 are cytoplasmic; it reads GSQMS. The helical transmembrane segment at 83 to 106 threads the bilayer; that stretch reads LLRAICYMVAQLLGAVAGAAVLYS. The Extracellular segment spans residues 107-127; it reads VTPPAVRGNLALNTLHPGVSV. The helical transmembrane segment at 128–148 threads the bilayer; that stretch reads GQATIVEIFLTLQFVLCIFAT. The Cytoplasmic segment spans residues 149-156; the sequence is YDERRNGR. A helical membrane pass occupies residues 157–175; the sequence is LGSVALAVGFSLTLGHLFG. Over 176 to 178 the chain is Extracellular; the sequence is MYY. An intramembrane region (discontinuously helical) is located at residues 179–193; the sequence is TGAGMNPARSFAPAI. The short motif at 184-186 is the NPA 2 element; it reads NPA. The Extracellular portion of the chain corresponds to 194–200; that stretch reads LTRNFTN. Residues 201–222 traverse the membrane as a helical segment; it reads HWVYWVGPVIGAGLGSLLYDFL. Residues 223 to 263 lie on the Cytoplasmic side of the membrane; that stretch reads LFPRLKSVSERLSILKGSRPSESNGQPEVTGEPVELKTQAL. The interaction with CALM stretch occupies residues 227–237; that stretch reads LKSVSERLSIL. At S235 the chain carries Phosphoserine. Residues 239–263 form a disordered region; the sequence is GSRPSESNGQPEVTGEPVELKTQAL. S243 bears the Phosphoserine; by PKA mark. S245 is subject to Phosphoserine. N246 is modified (deamidated asparagine).

This sequence belongs to the MIP/aquaporin (TC 1.A.8) family. As to quaternary structure, homotetramer; each monomer provides an independent water pore. Two homotetramers on opposing membranes can dimerize, forming a cell-cell junction. Interacts with CALM; the calcium-calmodulin/CALM complex interacts with the cytoplasmic domains of two aquaporins, leading to channel closure. Interacts with BFSP1 (via C-terminus); prevents calcium-dependent inhibition of the water channel activity. In terms of processing, fatty acylated at Met-1 and Lys-238. The acyl modifications, in decreasing order of ion abundance, are: oleoyl (C18:1) &gt; palmitoyl (C16:0) &gt; stearoyl (C18:0) &gt; eicosenoyl (C20:1) &gt; dihomo-gamma-linolenoyl (C20:3) &gt; palmitoleoyl (C16:1) &gt; eicosadienoyl (C20:2). Post-translationally, subject to partial proteolytic cleavage in the eye lens core. Partial proteolysis promotes interactions between tetramers from adjoining membranes. In terms of tissue distribution, major component of lens fiber junctions.

It is found in the cell membrane. The protein resides in the cell junction. The enzyme catalyses H2O(in) = H2O(out). Its activity is regulated as follows. The water channel activity is inhibited by calcium through calmodulin/CALM. Functionally, aquaporins form homotetrameric transmembrane channels, with each monomer independently mediating water transport across the plasma membrane along its osmotic gradient. Specifically expressed in lens fiber cells, this aquaporin is crucial for maintaining lens water homeostasis and transparency. Beyond water permeability, it also acts as a cell-to-cell adhesion molecule, forming thin junctions between lens fiber cells that are essential for maintaining the ordered structure and transparency of the lens. The chain is Lens fiber major intrinsic protein from Bos taurus (Bovine).